The sequence spans 490 residues: Katanin p60 ATPase-containing subunit A-like 1 (490 aa).

Position 1 is an N-acetylmethionine (Met-1). Positions 95-184 (DPAVWPPPVP…DGEMPKFDGA (90 aa)) are disordered. The segment covering 116 to 127 (PNREVRPLRKEM) has biased composition (basic and acidic residues). The segment covering 128-139 (AGVGARGPVGRA) has biased composition (low complexity). The segment covering 143–169 (SKSEKPSTSRDKDYRARGRDDKGRKNM) has biased composition (basic and acidic residues). Position 174 is a phosphoserine (Ser-174). Residue 248-255 (GPPGTGKT) participates in ATP binding.

Belongs to the AAA ATPase family. Katanin p60 subunit A1 subfamily. A-like 1 sub-subfamily. Interacts with KATNB1 and KATNBL1. In terms of tissue distribution, expressed in testis, restricted to Sertoli cells (at protein level).

Its subcellular location is the cytoplasm. It localises to the cytoskeleton. The protein localises to the spindle pole. It is found in the spindle. It carries out the reaction n ATP + n H2O + a microtubule = n ADP + n phosphate + (n+1) alpha/beta tubulin heterodimers.. Its function is as follows. Regulates microtubule dynamics in Sertoli cells, a process that is essential for spermiogenesis and male fertility. Severs microtubules in an ATP-dependent manner, promoting rapid reorganization of cellular microtubule arrays. Has microtubule-severing activity in vitro. The sequence is that of Katanin p60 ATPase-containing subunit A-like 1 from Homo sapiens (Human).